The primary structure comprises 486 residues: Serine/threonine-protein phosphatase 2A 56 kDa regulatory subunit alpha isoform (486 aa).

The span at 1 to 18 (MSSSSPPAGAASAAISAS) shows a compositional bias: low complexity. The disordered stretch occupies residues 1-52 (MSSSSPPAGAASAAISASEKVDGFTRKSVRKAQRQKRSQGSSQFRSQGSQAE). Serine 2 carries the post-translational modification N-acetylserine. Positions 27–37 (KSVRKAQRQKR) are enriched in basic residues. Positions 38-51 (SQGSSQFRSQGSQA) are enriched in low complexity. Phosphoserine occurs at positions 41, 42, and 49.

It belongs to the phosphatase 2A regulatory subunit B56 family. As to quaternary structure, PP2A consists of a common heterodimeric core enzyme, composed of a 36 kDa catalytic subunit (subunit C) and a 65 kDa constant regulatory subunit (PR65 or subunit A), that associates with a variety of regulatory subunits. Proteins that associate with the core dimer include three families of regulatory subunits B (the R2/B/PR55/B55, R3/B''/PR72/PR130/PR59 and R5/B'/B56 families), the 48 kDa variable regulatory subunit, viral proteins, and cell signaling molecules. Interacts with SGO1. Post-translationally, phosphorylated on serine residues. In terms of tissue distribution, widely expressed with the highest expression in heart and skeletal muscle.

It localises to the cytoplasm. It is found in the nucleus. The protein localises to the chromosome. Its subcellular location is the centromere. Functionally, the B regulatory subunit might modulate substrate selectivity and catalytic activity, and might also direct the localization of the catalytic enzyme to a particular subcellular compartment. This is Serine/threonine-protein phosphatase 2A 56 kDa regulatory subunit alpha isoform (PPP2R5A) from Homo sapiens (Human).